The chain runs to 179 residues: Large ribosomal subunit protein uL5 (179 aa).

Belongs to the universal ribosomal protein uL5 family. Part of the 50S ribosomal subunit; part of the 5S rRNA/L5/L18/L25 subcomplex. Contacts the 5S rRNA and the P site tRNA. Forms a bridge to the 30S subunit in the 70S ribosome.

This is one of the proteins that bind and probably mediate the attachment of the 5S RNA into the large ribosomal subunit, where it forms part of the central protuberance. In the 70S ribosome it contacts protein S13 of the 30S subunit (bridge B1b), connecting the 2 subunits; this bridge is implicated in subunit movement. Contacts the P site tRNA; the 5S rRNA and some of its associated proteins might help stabilize positioning of ribosome-bound tRNAs. This Buchnera aphidicola subsp. Cinara cedri (strain Cc) protein is Large ribosomal subunit protein uL5.